We begin with the raw amino-acid sequence, 132 residues long: Large ribosomal subunit protein bL21 (132 aa).

Residues 112–132 are disordered; it reads AEKPARKPRAKKTNEVTTDGA.

This sequence belongs to the bacterial ribosomal protein bL21 family. As to quaternary structure, part of the 50S ribosomal subunit. Contacts protein L20.

Its function is as follows. This protein binds to 23S rRNA in the presence of protein L20. The polypeptide is Large ribosomal subunit protein bL21 (Dehalococcoides mccartyi (strain ATCC BAA-2266 / KCTC 15142 / 195) (Dehalococcoides ethenogenes (strain 195))).